Here is a 465-residue protein sequence, read N- to C-terminus: Lactaldehyde dehydrogenase (465 aa).

220–225 (GSVEVG) lines the NAD(+) pocket. Active-site residues include Glu240 and Cys274.

It belongs to the aldehyde dehydrogenase family. Homotetramer.

The enzyme catalyses (S)-lactaldehyde + NAD(+) + H2O = (S)-lactate + NADH + 2 H(+). The protein operates within cofactor biosynthesis; coenzyme F420 biosynthesis. In terms of biological role, involved in F420 biosynthesis through the oxidation of lactaldehyde to lactate. The protein is Lactaldehyde dehydrogenase of Methanococcus vannielii (strain ATCC 35089 / DSM 1224 / JCM 13029 / OCM 148 / SB).